The chain runs to 87 residues: Cell division topological specificity factor (87 aa).

This sequence belongs to the MinE family.

Its function is as follows. Prevents the cell division inhibition by proteins MinC and MinD at internal division sites while permitting inhibition at polar sites. This ensures cell division at the proper site by restricting the formation of a division septum at the midpoint of the long axis of the cell. The polypeptide is Cell division topological specificity factor (Clostridium botulinum (strain ATCC 19397 / Type A)).